The chain runs to 244 residues: UDP-2,3-diacylglucosamine hydrolase (244 aa).

Positions 8, 10, 41, 79, and 114 each coordinate Mn(2+). Residue 79–80 coordinates substrate; it reads NR. Positions 122, 160, 164, 167, and 195 each coordinate substrate. Residues His195 and His197 each coordinate Mn(2+).

It belongs to the LpxH family. The cofactor is Mn(2+).

It localises to the cell inner membrane. The enzyme catalyses UDP-2-N,3-O-bis[(3R)-3-hydroxytetradecanoyl]-alpha-D-glucosamine + H2O = 2-N,3-O-bis[(3R)-3-hydroxytetradecanoyl]-alpha-D-glucosaminyl 1-phosphate + UMP + 2 H(+). The protein operates within glycolipid biosynthesis; lipid IV(A) biosynthesis; lipid IV(A) from (3R)-3-hydroxytetradecanoyl-[acyl-carrier-protein] and UDP-N-acetyl-alpha-D-glucosamine: step 4/6. Its function is as follows. Hydrolyzes the pyrophosphate bond of UDP-2,3-diacylglucosamine to yield 2,3-diacylglucosamine 1-phosphate (lipid X) and UMP by catalyzing the attack of water at the alpha-P atom. Involved in the biosynthesis of lipid A, a phosphorylated glycolipid that anchors the lipopolysaccharide to the outer membrane of the cell. This chain is UDP-2,3-diacylglucosamine hydrolase, found in Hahella chejuensis (strain KCTC 2396).